The primary structure comprises 144 residues: MIGLIQRVKWAKVEVEGQTVGEITQGLLVLLGVEQGDDQAKADKLLEKVLNYRVFSDEQGKMNLNVQQAGGSLLVVSQFTLAADTNKGLRPSFSRGAAPQEANALYEYFHQQAARKIHTQTGQFAADMQVSLQNDGPVTFWLQI.

The Gly-cisPro motif, important for rejection of L-amino acids signature appears at 136–137 (GP).

Belongs to the DTD family. As to quaternary structure, homodimer.

The protein localises to the cytoplasm. The enzyme catalyses glycyl-tRNA(Ala) + H2O = tRNA(Ala) + glycine + H(+). It catalyses the reaction a D-aminoacyl-tRNA + H2O = a tRNA + a D-alpha-amino acid + H(+). Functionally, an aminoacyl-tRNA editing enzyme that deacylates mischarged D-aminoacyl-tRNAs. Also deacylates mischarged glycyl-tRNA(Ala), protecting cells against glycine mischarging by AlaRS. Acts via tRNA-based rather than protein-based catalysis; rejects L-amino acids rather than detecting D-amino acids in the active site. By recycling D-aminoacyl-tRNA to D-amino acids and free tRNA molecules, this enzyme counteracts the toxicity associated with the formation of D-aminoacyl-tRNA entities in vivo and helps enforce protein L-homochirality. This Actinobacillus pleuropneumoniae serotype 5b (strain L20) protein is D-aminoacyl-tRNA deacylase.